The chain runs to 152 residues: Protein Smg homolog (152 aa).

It belongs to the Smg family.

The polypeptide is Protein Smg homolog (Nitrosomonas eutropha (strain DSM 101675 / C91 / Nm57)).